A 1959-amino-acid polypeptide reads, in one-letter code: Sodium channel protein type 10 subunit alpha (1959 aa).

Residues 1 to 125 (MEFPIGSVGT…FNLIRRTAIK (125 aa)) are Cytoplasmic-facing. The interval 30–53 (AHGAAKKARAKHGERKGQDEKPRP) is disordered. Over residues 33 to 43 (AAKKARAKHGE) the composition is skewed to basic residues. Basic and acidic residues predominate over residues 44–53 (RKGQDEKPRP). An I repeat occupies 116–404 (FNLIRRTAIK…VTMAYEEQNQ (289 aa)). A helical transmembrane segment spans residues 126 to 149 (VSVHAWFSIFITITILFNCVCMTQ). Topologically, residues 150–154 (NDLPE) are extracellular. Residues 155-174 (KIEYAFTVIYTFEALIKILA) form a helical membrane-spanning segment. Residues 175 to 187 (RGFCLNEFTYLRD) lie on the Cytoplasmic side of the membrane. A helical transmembrane segment spans residues 188-206 (PWNWLDFSVITLAYVGAAI). Over 207 to 212 (DLRGIS) the chain is Extracellular. A helical; Voltage-sensor transmembrane segment spans residues 213-232 (GLRTFRVLRALKTVSVIPGL). At 233–248 (KVIVGALIHSVRKLAD) the chain is on the cytoplasmic side. The chain crosses the membrane as a helical span at residues 249–272 (VTILTVFCLSVFALVGLQLFKGNL). Over 273-340 (KNKCIKRSTD…PDFNYTSFDS (68 aa)) the chain is Extracellular. Cysteines 276 and 318 form a disulfide. Residues Asn-288, Asn-311, and Asn-334 are each glycosylated (N-linked (GlcNAc...) asparagine). Positions 341 to 365 (FAWAFLSLFRLMTQDSWERLYQQTL) form an intramembrane region, pore-forming. Residues 366 to 372 (RASGKMY) are Extracellular-facing. A helical transmembrane segment spans residues 373–398 (MVFFVLVIFLGSFYLVNLILAVVTMA). Over 399–659 (YEEQNQATIA…KWMKFKMVLF (261 aa)) the chain is Cytoplasmic. Residues Ser-440, Ser-443, Ser-466, and Ser-478 each carry the phosphoserine modification. Disordered stretches follow at residues 442–484 (HSHN…YNQR) and 510–578 (SQDV…ELTT). Over residues 475 to 484 (SPQSDPYNQR) the composition is skewed to polar residues. The segment covering 523 to 533 (GVFHGDHESHR) has biased composition (basic and acidic residues). Phosphoserine is present on residues Ser-612 and Ser-615. The II repeat unit spans residues 647-911 (CCPKWMKFKM…EDDGEVNNLQ (265 aa)). The helical transmembrane segment at 660-684 (ELVTDPFAELTITLCIVVNTIFMAM) threads the bilayer. Over 685–695 (EHYPMTDAFDA) the chain is Extracellular. The helical transmembrane segment at 696–719 (MLQAGNIVFTVFFTMEMAFKIIAF) threads the bilayer. At 720-727 (DPYYYFQK) the chain is on the cytoplasmic side. A helical transmembrane segment spans residues 728 to 747 (KWNVFDCVIVTVSLLELSIA). Residues 748 to 753 (KKGSLS) are Extracellular-facing. A helical; Voltage-sensor membrane pass occupies residues 754–773 (VLRTFRLLRVFKLAKSWPTL). Residues 774–789 (NTLIKIIGNSVGALGN) are Cytoplasmic-facing. Residues 790–810 (LTFILAIIVFIFALVGKQLLG) form a helical membrane-spanning segment. The Extracellular portion of the chain corresponds to 811 to 834 (EDYGCRKDGTALWNEGQLRWHMCD). Positions 835 to 855 (FFHSFLVIFRILCGEWIENMW) form an intramembrane region, pore-forming. At 856–864 (VCMQVSEKS) the chain is on the extracellular side. A disulfide bridge links Cys-857 with Cys-866. A helical membrane pass occupies residues 865–890 (ICLILFLTVMVLGNLVVLNLFIALLL). Over 891-1149 (NSFSADNLTA…GWQVRKTCYR (259 aa)) the chain is Cytoplasmic. Over residues 1004–1016 (GESDLDELEEDIE) the composition is skewed to acidic residues. Disordered stretches follow at residues 1004–1034 (GESDLDELEEDIEQNSQSSWREESPKGQQDQ) and 1071–1097 (ATPQVPAEGVDDTSSSEGSTVDCPDPE). The stretch at 1142–1451 (QVRKTCYRIV…KKYYNAMKKL (310 aa)) is one III repeat. A helical membrane pass occupies residues 1150–1173 (IVEHSWFESFIIFMILLSSGALAF). Residues 1174 to 1186 (EDNYLEQKPRVKS) lie on the Extracellular side of the membrane. A helical membrane pass occupies residues 1187–1212 (MLEYTDRVFTFIFVFEMLLKWVAYGF). Residues 1213–1218 (KKYFTN) are Cytoplasmic-facing. A helical transmembrane segment spans residues 1219 to 1240 (AWCWLDFLIVNISLTSLIAKIL). The Extracellular segment spans residues 1241–1244 (DYSD). Residues 1245 to 1266 (VASLKALRTLRALRPLRALSRF) form a helical; Voltage-sensor membrane-spanning segment. Topologically, residues 1267 to 1285 (EGMRVVVDALVGAIPSIMN) are cytoplasmic. The chain crosses the membrane as a helical span at residues 1286–1313 (VLLVCLIFWLIFSIMGVNLFAGKFSRCI). Residues 1314 to 1355 (DTSNNPFSVVNSTIVNNKSECRNQNHTGHFFWVNVKVNFDNV) lie on the Extracellular side of the membrane. The pore-forming intramembrane region spans 1356-1377 (AMGYLALLQVATFKGWMDIMYA). At 1378-1393 (AVDSREINSQPQWEDN) the chain is on the extracellular side. Residues 1394-1420 (LYMYLYFVVFIIFGGFFTLNLFVGVII) traverse the membrane as a helical segment. Topologically, residues 1421-1473 (DNFNQQKKKLGGQDIFMTEEQKKYYNAMKKLGSKKPQKPIPRPLNKYQGFVFD) are cytoplasmic. Position 1453 is a phosphoserine; by PKC (Ser-1453). The stretch at 1460–1759 (IPRPLNKYQG…WEKFDPEATQ (300 aa)) is one IV repeat. The helical transmembrane segment at 1474-1497 (IVTRQAFDIIIMVLICLNMITMMV) threads the bilayer. Topologically, residues 1498 to 1508 (ETDGQSEEKTK) are extracellular. Residues 1509–1532 (ILGRINQFFVAVFTGECVMKMFAL) traverse the membrane as a helical segment. Topologically, residues 1533 to 1538 (RQYYFT) are cytoplasmic. The chain crosses the membrane as a helical span at residues 1539–1562 (NGWNVFDFIVVILSIGSLVFSAIL). Over 1563–1574 (KSLESYFSPTLF) the chain is Extracellular. The helical; Voltage-sensor transmembrane segment at 1575 to 1596 (RVIRLARIGRILRLIRAAKGIR) threads the bilayer. At 1597 to 1611 (TLLFALMMSLPALFN) the chain is on the cytoplasmic side. A helical membrane pass occupies residues 1612 to 1634 (IGLLLFLVMFIYSIFGMASFANV). Over 1635–1648 (VEEAGIDDMFNFQT) the chain is Extracellular. Residues 1649–1671 (FGNSMLCLFQITTSAGWDGLLSP) constitute an intramembrane region (pore-forming). Over 1672–1699 (ILNTGPPYCDPNLSNNNTSKGNCGSPTV) the chain is Extracellular. The chain crosses the membrane as a helical span at residues 1700–1724 (GIVFFTTYIIISFLIVVNMYIAVIL). Residues 1725 to 1959 (ENFNVATEES…SKEGDSPGPQ (235 aa)) lie on the Cytoplasmic side of the membrane. Residues 1853–1882 (EDISATVIQKAYRSYVLQRSLTLSNPLRVP) enclose the IQ domain. The interval 1901–1959 (ANDSGRLPDKSETTSATSFPPSYDSVTRGLSDRVNISTSNSMHNEDEVTSKEGDSPGPQ) is disordered. Basic and acidic residues predominate over residues 1943–1959 (HNEDEVTSKEGDSPGPQ).

Belongs to the sodium channel (TC 1.A.1.10) family. Nav1.8/SCN10A subfamily. In terms of assembly, the channel consists of an ion conducting pore forming alpha-subunit regulated by one or more associated auxiliary subunits SCN1B, SCN2B and SCN3B; electrophysiological properties may vary depending on the type of the associated beta subunits. Found in a number of complexes with PRX, DYNLT1 and PDZD2. Interacts with proteins such as FSTL1, PRX, DYNLT1, PDZD2, S100A10 and many others. Interacts with NEDD4 and NEDD4L. Post-translationally, ubiquitinated by NEDD4L; which promotes its endocytosis. In terms of processing, phosphorylation at Ser-1453 by PKC in a highly conserved cytoplasmic loop slows inactivation of the sodium channel and reduces peak sodium currents. Lacks the cysteine which covalently binds the conotoxin GVIIJ. This cysteine (position 816) is speculated in other sodium channel subunits alpha to be implied in covalent binding with the sodium channel subunit beta-2 or beta-4.

The protein localises to the cell membrane. The enzyme catalyses Na(+)(in) = Na(+)(out). Functionally, tetrodotoxin-resistant channel that mediates the voltage-dependent sodium ion permeability of excitable membranes. Assuming opened or closed conformations in response to the voltage difference across the membrane, the protein forms a sodium-selective channel through which sodium ions may pass in accordance with their electrochemical gradient. Plays a role in neuropathic pain mechanisms. This is Sodium channel protein type 10 subunit alpha (Scn10a) from Onychomys torridus (Southern grasshopper mouse).